We begin with the raw amino-acid sequence, 485 residues long: Mitochondrial metalloendopeptidase OMA1 (485 aa).

The transit peptide at 1-16 (MKPSLKRRLLLLSRKF) directs the protein to the mitochondrion. The Mitochondrial matrix portion of the chain corresponds to 17–147 (AKASIRKLLR…GPGRWFQNPR (131 aa)). The chain crosses the membrane as a helical span at residues 148–168 (TVFTVVLVGSVGLITLIVGNT). The Mitochondrial intermembrane portion of the chain corresponds to 169 to 485 (ETIPYTKRTH…AGRTGVEGFL (317 aa)). His-352 is a binding site for Zn(2+). Residue Glu-353 is part of the active site. 2 residues coordinate Zn(2+): His-356 and Glu-405. The segment at 456-485 (KLLAQANVMEEALMIYREVQAGRTGVEGFL) is required for protease activation.

The protein belongs to the peptidase M48A family. In terms of assembly, homooligomer. The cofactor is Zn(2+).

The protein resides in the mitochondrion inner membrane. In terms of biological role, protease that is part of the quality control system in the inner membrane of mitochondria. Metalloendopeptidase that modulates the oxidative phosphorylation (OXPHOS) system and plant growth. Involved in tolerance mechanisms to heat, osmotic and oxidative stresses. The protein is Mitochondrial metalloendopeptidase OMA1 of Arabidopsis thaliana (Mouse-ear cress).